The chain runs to 471 residues: Eukaryotic translation initiation factor 3 subunit L (471 aa).

One can recognise a PCI domain in the interval 252-446; sequence DAIRMFSHIL…DLDYAMQGDL (195 aa).

This sequence belongs to the eIF-3 subunit L family.

It localises to the cytoplasm. In terms of biological role, component of the eukaryotic translation initiation factor 3 (eIF-3) complex, which is involved in protein synthesis of a specialized repertoire of mRNAs and, together with other initiation factors, stimulates binding of mRNA and methionyl-tRNAi to the 40S ribosome. The eIF-3 complex specifically targets and initiates translation of a subset of mRNAs involved in cell proliferation. This is Eukaryotic translation initiation factor 3 subunit L from Pyricularia oryzae (strain Y34) (Rice blast fungus).